A 232-amino-acid chain; its full sequence is Large ribosomal subunit protein uL1 (232 aa).

The protein belongs to the universal ribosomal protein uL1 family. In terms of assembly, part of the 50S ribosomal subunit.

Binds directly to 23S rRNA. The L1 stalk is quite mobile in the ribosome, and is involved in E site tRNA release. In terms of biological role, protein L1 is also a translational repressor protein, it controls the translation of the L11 operon by binding to its mRNA. In Thermosipho africanus (strain TCF52B), this protein is Large ribosomal subunit protein uL1.